Here is a 450-residue protein sequence, read N- to C-terminus: Protein tweety homolog 1 (450 aa).

The Extracellular portion of the chain corresponds to 1–43 (MGAPPGYRPSAWVHLLHQLPRADFQLRPVPSVFAPQEQEYQQA). The chain crosses the membrane as a helical span at residues 44–64 (LLLVAALAGLGLGLSLIFIAV). Residues 65–88 (YLIRFCCCRPPEPPGSKIPSPGGG) lie on the Cytoplasmic side of the membrane. Residues 89 to 109 (CVTWSCIVALLAGCTGIGIGF) form a helical membrane-spanning segment. At 110-214 (YGNSETSDGV…NVSFVEEYRW (105 aa)) the chain is on the extracellular side. 2 N-linked (GlcNAc...) asparagine glycosylation sites follow: Asn-130 and Asn-205. The chain crosses the membrane as a helical span at residues 215-235 (LAYVLLLLLELLVCLFTLLGL). The Cytoplasmic segment spans residues 236-240 (AKQSK). The helical transmembrane segment at 241–261 (WLVIVMTVMSLLVLVLSWGSM) threads the bilayer. Residues 262-390 (GLEAATAVGL…LRGLCEDALE (129 aa)) are Extracellular-facing. 2 disulfides stabilise this stretch: Cys-275–Cys-385 and Cys-303–Cys-370. 2 N-linked (GlcNAc...) asparagine glycosylation sites follow: Asn-284 and Asn-355. The chain crosses the membrane as a helical span at residues 391 to 411 (GLLFLLLFSLLSAGALATALC). Over 412-450 (SLPRAWALFPPSDDYDDTDDDDPFNPQESKRFVQWQSSI) the chain is Cytoplasmic. Residues 428 to 450 (DTDDDDPFNPQESKRFVQWQSSI) form a disordered region. At Ser-440 the chain carries Phosphoserine.

It belongs to the tweety family. Homotetramer; disulfide-linked. Homodimer. N-glycosylated. Contains high-mannose, hybrid and complex oligosaccharides. Expressed in brain, eye, ovary and testis, and at lower levels in muscle, placenta, liver and lung.

The protein resides in the cell membrane. The catalysed reaction is chloride(in) = chloride(out). The enzyme catalyses L-glutamate(out) = L-glutamate(in). Functionally, calcium-independent, swelling-dependent volume-regulated anion channel (VRAC-swell) which plays a pivotal role in the process of regulatory volume decrease (RVD) in the brain through the efflux of anions like chloride and organic osmolytes like glutamate. Ca(2+)-independent, swelling-activated chloride channel, possibly involved in regulation of cell volume. This Homo sapiens (Human) protein is Protein tweety homolog 1 (TTYH1).